The chain runs to 60 residues: Large ribosomal subunit protein bL32 (60 aa).

Basic residues predominate over residues 1–20 (MAVQKSRKSRSRRDMRRSHH). Residues 1–22 (MAVQKSRKSRSRRDMRRSHHRM) form a disordered region.

The protein belongs to the bacterial ribosomal protein bL32 family.

The protein is Large ribosomal subunit protein bL32 of Psychrobacter arcticus (strain DSM 17307 / VKM B-2377 / 273-4).